We begin with the raw amino-acid sequence, 426 residues long: Protein sum2 (426 aa).

The Sm domain occupies 1 to 80 (MTEFIGSRIS…VKDLRIEEPA (80 aa)). Disordered regions lie at residues 79-100 (PATT…IGSN), 204-305 (GMPS…AKPR), and 348-426 (SCES…ANDQ). Positions 84-93 (SAPPVQPPND) are enriched in pro residues. A compositionally biased stretch (polar residues) spans 226–237 (VSASPSLQSMPP). Residues 261 to 278 (RNSTVTNDRVVNTTVDVS) are compositionally biased toward low complexity. A compositionally biased stretch (polar residues) spans 279–298 (QSQTVETSGPSKEVPTTQPD). Positions 296-332 (QPDASAAKPRTEFDFQTANQKFQSMKDDLLKGKNDEE) constitute a DFDF domain. The FFD box motif lies at 335 to 351 (EFYKPKQSFFDNISCES). Residues 350–371 (ESKEKGMEAADRRALRDRERSL) show a composition bias toward basic and acidic residues. The TFG box motif lies at 360–380 (DRRALRDRERSLNMETFGVAG). Positions 384–401 (RGRRGRGRGRGGRGRGRG) are enriched in basic residues. The segment covering 405–426 (NQYNQYRNSNGSQPRAQPANDQ) has biased composition (polar residues).

Required for G2/M phase checkpoint control. In Schizosaccharomyces pombe (strain 972 / ATCC 24843) (Fission yeast), this protein is Protein sum2 (sum2).